A 399-amino-acid chain; its full sequence is Fructose-bisphosphate aldolase 1, chloroplastic (399 aa).

The transit peptide at 1–48 (MASSTATMLKASPVKSDWVKGQSLLLRQPSSVSAIRSHVAPSALTVRA) directs the protein to the chloroplast. Residue Arg96 participates in substrate binding. At Ser158 the chain carries Phosphoserine. Lys186 contributes to the substrate binding site. Phosphoserine is present on Ser216. The Proton acceptor role is filled by Glu226. Lys268 (schiff-base intermediate with dihydroxyacetone-P) is an active-site residue. 310–312 (SGG) provides a ligand contact to substrate. Lys395 carries the post-translational modification N6,N6,N6-trimethyllysine.

Belongs to the class I fructose-bisphosphate aldolase family. Homotetramer. Can be trimethylated at Lys-395 by LSMT-L, but the trimethylation has no effect in vitro on the kinetic properties of the enzyme. In terms of processing, S-glutathionylated. As to expression, highly expressed in rosettes leaves and cauline leaves.

It localises to the plastid. Its subcellular location is the chloroplast. It is found in the plastoglobule. The protein localises to the chloroplast stroma. It catalyses the reaction beta-D-fructose 1,6-bisphosphate = D-glyceraldehyde 3-phosphate + dihydroxyacetone phosphate. Its pathway is carbohydrate degradation; glycolysis; D-glyceraldehyde 3-phosphate and glycerone phosphate from D-glucose: step 4/4. In terms of biological role, plays a key role in glycolysis and gluconeogenesis. The sequence is that of Fructose-bisphosphate aldolase 1, chloroplastic from Arabidopsis thaliana (Mouse-ear cress).